Here is a 562-residue protein sequence, read N- to C-terminus: Potassium-transporting ATPase potassium-binding subunit (562 aa).

12 consecutive transmembrane segments (helical) span residues 5 to 25, 63 to 83, 132 to 152, 175 to 195, 250 to 270, 279 to 299, 327 to 347, 356 to 376, 379 to 399, 416 to 436, 483 to 503, and 526 to 546; these read AFLL…PLGS, AAAI…LLMA, GLTV…FALI, LYVL…QGVL, LSNI…CFAF, QGHA…AVVM, FGVL…TGAV, ALGG…FGGV, GLYG…LMIG, MTAL…ALAL, VLLA…VLAI, and LFIG…FIPA.

It belongs to the KdpA family. As to quaternary structure, the system is composed of three essential subunits: KdpA, KdpB and KdpC.

The protein localises to the cell inner membrane. In terms of biological role, part of the high-affinity ATP-driven potassium transport (or Kdp) system, which catalyzes the hydrolysis of ATP coupled with the electrogenic transport of potassium into the cytoplasm. This subunit binds the periplasmic potassium ions and delivers the ions to the membrane domain of KdpB through an intramembrane tunnel. The chain is Potassium-transporting ATPase potassium-binding subunit from Pectobacterium carotovorum subsp. carotovorum (strain PC1).